The sequence spans 793 residues: MDSEQPDSLDGWVPLREDLFPEPERHQLRFLVAWNAAKGQFAVTCHDRTAQRRRRERREAGDGGCSWAGVLSPAGFRGAHRQLAALWPALEPCFPPLPPELDAASGAGWGLGRGLWALLWPLLWPAPADPGDSALQELCRQLEHYLGLAAEGCGGATVRDVLFPAPGDSADCEGLSEFRERTLRARLGQTATRLHQVLQDHGKANTMVALMKVYQEEDELYQELVTMATTFFQYLLQPFRDMREVATSCKLGILKSLDEDELGPRRVAALQKEASEWTRQAEEAVGSIQDITVNYFKETVTALTGMQKQMEQDQKRFGQAAWATAMPRLENLKLMLARETLQLMRAKELCLKHRQAEIQRKVEDLPRQGKQLDVVDELEIQCYEIQLELYDVKLEMLRNEETILVTRLDSVKRLITEKQAEVIYYDPCESPEELQSLAPDLELHLGDNRELRALSQQCQRLEAQRGRICSRRALLRNRKDHCRENHQLRLQQAKQSLRHLHQHHSIQMKRDKVKEEEQKKKEWIDHERQKTLERLRAYKEKCPAHRSALKTTCSESMVSNLPGGRSQKRLSTAHHHKTAHPASSKTGSAVPLPEASVRPPEHQDPCGSVPVQAFVPVSDQTLSGSSEDLSLPPQPPAPPLPPPPPPPPPPPLPPALSSFQGTTHQNLGLRTLATEDRPLPLACDPSAGRPCDYQGPGSMDEVLASLRQGKASLRKVETPTLPHPGTSVNEQVLAAIRQGVQLKKVHTGQGVDPGKKSTSDLERSIREALERIKKVSADSEEDNDEPSPTEWDR.

Residues 1–253 form a mediates association with membranes region; the sequence is MDSEQPDSLD…EVATSCKLGI (253 aa). The interval 254–623 is mediates interaction with microtubules; the sequence is LKSLDEDELG…FVPVSDQTLS (370 aa). Coiled-coil stretches lie at residues 265-290 and 445-503; these read RRVA…SIQD and LGDN…LHQH. Disordered stretches follow at residues 556–661 and 675–699; these read SMVS…SFQG and EDRP…PGSM. Basic residues predominate over residues 566–579; it reads SQKRLSTAHHHKTA. Polar residues predominate over residues 618–628; that stretch reads SDQTLSGSSED. The tract at residues 624–793 is mediates actin nucleation; the sequence is GSSEDLSLPP…DEPSPTEWDR (170 aa). Pro residues predominate over residues 632-654; sequence PPQPPAPPLPPPPPPPPPPPLPP. 2 WH2 domains span residues 698–716 and 728–745; these read SMDE…LRKV and VNEQ…LKKV. A coiled-coil region spans residues 755–785; sequence KKSTSDLERSIREALERIKKVSADSEEDNDE. Residues 772–793 are disordered; sequence IKKVSADSEEDNDEPSPTEWDR. A compositionally biased stretch (acidic residues) spans 778-787; sequence DSEEDNDEPS. Ser-779 carries the phosphoserine modification.

In terms of assembly, interacts with ACTR3; indicative for an association with the ARP2/3 complex. Associates with microtubules; in vitro binds to tubulin heterodimer in a 1:1 stoichiometry; decorates microtubules with a repeat of 80 A along protofilaments. Interacts with RHOD (in GTP-bound form).

It is found in the cytoplasm. The protein resides in the endoplasmic reticulum-Golgi intermediate compartment. The protein localises to the cytoplasmic vesicle membrane. It localises to the golgi apparatus. Its subcellular location is the cis-Golgi network. Functionally, acts as a nucleation-promoting factor (NPF) that stimulates Arp2/3-mediated actin polymerization both at the Golgi apparatus and along tubular membranes. Involved as a regulator of Golgi positioning and morphology. Its activity in membrane tubulation requires F-actin and interaction with microtubules. Proposed to use coordinated actin-nucleating and microtubule-binding activities of distinct WHAMM molecules to drive membrane tubule elongation; when MT-bound can recruit and remodel membrane vesicles but is prevented to activate the Arp2/3 complex. Required for RhoD-dependent actin reorganization such as in cell adhesion and cell migration. Participates in vesicle transport between the endoplasmic reticulum and the Golgi complex. The polypeptide is WASP homolog-associated protein with actin, membranes and microtubules (Whamm) (Mus musculus (Mouse)).